The following is a 199-amino-acid chain: CASP-like protein 2B1 (199 aa).

Residues 1-26 (MSYLGVGLSPVNVAGTKMKLMDRKVR) lie on the Cytoplasmic side of the membrane. The chain crosses the membrane as a helical span at residues 27–47 (LTELILRCSVCALALVAAILI). Over 48-69 (ATDTQVKEIFTIQKKAKYTDMK) the chain is Extracellular. Residues 70–90 (ALVFLVVVNGIAAAYSLLHMV) traverse the membrane as a helical segment. The Cytoplasmic portion of the chain corresponds to 91 to 106 (RCVVGMMKGSVLFSKP). The helical transmembrane segment at 107–127 (LAWAIFSGDQAIAYLTVAGVA) threads the bilayer. Residues 128–164 (AAAQSAAFAKLGEPELQWMKICTIYGKFCNQVGEGIA) are Extracellular-facing. The helical transmembrane segment at 165–185 (TALLASIGMVLISSISAFALF) threads the bilayer. Residues 186 to 199 (RLYGGNKAQQGSRW) are Cytoplasmic-facing.

Belongs to the Casparian strip membrane proteins (CASP) family. As to quaternary structure, homodimer and heterodimers.

The protein resides in the cell membrane. This is CASP-like protein 2B1 from Eutrema halophilum (Salt cress).